We begin with the raw amino-acid sequence, 223 residues long: Deoxyribose-phosphate aldolase (223 aa).

Catalysis depends on Asp-91, which acts as the Proton donor/acceptor. The Schiff-base intermediate with acetaldehyde role is filled by Lys-153. The Proton donor/acceptor role is filled by Lys-182.

The protein belongs to the DeoC/FbaB aldolase family. DeoC type 1 subfamily.

The protein localises to the cytoplasm. It catalyses the reaction 2-deoxy-D-ribose 5-phosphate = D-glyceraldehyde 3-phosphate + acetaldehyde. It functions in the pathway carbohydrate degradation; 2-deoxy-D-ribose 1-phosphate degradation; D-glyceraldehyde 3-phosphate and acetaldehyde from 2-deoxy-alpha-D-ribose 1-phosphate: step 2/2. Catalyzes a reversible aldol reaction between acetaldehyde and D-glyceraldehyde 3-phosphate to generate 2-deoxy-D-ribose 5-phosphate. In Streptococcus pyogenes serotype M4 (strain MGAS10750), this protein is Deoxyribose-phosphate aldolase.